The primary structure comprises 342 residues: Methylthioribose-1-phosphate isomerase (342 aa).

Residues 49 to 51 (RGA), R86, and Q187 contribute to the substrate site. The active-site Proton donor is D228. 238–239 (NK) lines the substrate pocket.

Belongs to the eIF-2B alpha/beta/delta subunits family. MtnA subfamily.

It carries out the reaction 5-(methylsulfanyl)-alpha-D-ribose 1-phosphate = 5-(methylsulfanyl)-D-ribulose 1-phosphate. It participates in amino-acid biosynthesis; L-methionine biosynthesis via salvage pathway; L-methionine from S-methyl-5-thio-alpha-D-ribose 1-phosphate: step 1/6. Its function is as follows. Catalyzes the interconversion of methylthioribose-1-phosphate (MTR-1-P) into methylthioribulose-1-phosphate (MTRu-1-P). In Citrobacter koseri (strain ATCC BAA-895 / CDC 4225-83 / SGSC4696), this protein is Methylthioribose-1-phosphate isomerase.